The sequence spans 211 residues: LexA repressor (211 aa).

The segment at residues 28–48 (VREVGEAVGLSSSSTIHGHIE) is a DNA-binding region (H-T-H motif). Residues serine 132 and lysine 170 each act as for autocatalytic cleavage activity in the active site.

Belongs to the peptidase S24 family. In terms of assembly, homodimer.

It carries out the reaction Hydrolysis of Ala-|-Gly bond in repressor LexA.. Its function is as follows. Represses a number of genes involved in the response to DNA damage (SOS response), including recA and lexA. In the presence of single-stranded DNA, RecA interacts with LexA causing an autocatalytic cleavage which disrupts the DNA-binding part of LexA, leading to derepression of the SOS regulon and eventually DNA repair. The protein is LexA repressor of Leuconostoc citreum (strain KM20).